Reading from the N-terminus, the 578-residue chain is NADPH oxidase 4 (578 aa).

At Met-1–His-16 the chain is on the cytoplasmic side. The chain crosses the membrane as a helical span at residues Leu-17–Tyr-37. Topologically, residues Asn-38–Ser-62 are extracellular. The 246-residue stretch at Arg-58–Ile-303 folds into the Ferric oxidoreductase domain. A helical transmembrane segment spans residues Val-63–Leu-83. The Cytoplasmic segment spans residues Arg-84 to Leu-104. A helical transmembrane segment spans residues His-105 to Val-125. Over Asn-126–Leu-154 the chain is Extracellular. An N-linked (GlcNAc...) asparagine glycan is attached at Asn-133. A helical transmembrane segment spans residues Leu-155 to Val-175. Residues Thr-176–Asp-188 are Cytoplasmic-facing. The helical transmembrane segment at Ile-189–Ser-209 threads the bilayer. Over Gly-210–Glu-424 the chain is Extracellular. Residues Asn-218–Glu-273 form an E-loop; essential for H2O2 generating catalytic activity region. N-linked (GlcNAc...) asparagine glycosylation is present at Asn-230. The segment at His-248–Glu-575 is mediates interaction with TLR4. The 116-residue stretch at Arg-304–Glu-419 folds into the FAD-binding FR-type domain. The chain crosses the membrane as a helical span at residues Val-425–Leu-445. The Cytoplasmic portion of the chain corresponds to Leu-446–Ser-578.

In terms of assembly, interacts with, relocalizes and stabilizes CYBA/p22phox. Interacts with TLR4. Interacts with protein disulfide isomerase. Interacts with PPP1R15A. Interacts with LRRC8A; this interaction prevents the ubiquitin-mediated degradation of LRRC8A. Heme is required as a cofactor. N-glycosylation is required for the function. As to expression, EXpressed in brain, in all layers of the cerebellum, in pyramidal cells of the Ammon horn and in Purkinje cells (at protein level). Expressed in osteoclasts, leukocytes, kidney, liver and lung.

It localises to the cytoplasm. It is found in the endoplasmic reticulum membrane. Its subcellular location is the cell membrane. The protein localises to the cell junction. The protein resides in the focal adhesion. It localises to the nucleus. It carries out the reaction NADPH + 2 O2 = 2 superoxide + NADP(+) + H(+). The enzyme catalyses NADPH + O2 + H(+) = H2O2 + NADP(+). Activated by insulin. Inhibited by diphenylene iodonium. Inhibited by plumbagin. Activated by phorbol 12-myristate 13-acetate (PMA). NADPH oxidase that catalyzes predominantly the reduction of oxygen to H2O2. Can also catalyze to a smaller extent, the reduction of oxygen to superoxide. May function as an oxygen sensor regulating the KCNK3/TASK-1 potassium channel and HIF1A activity. May regulate insulin signaling cascade. May play a role in apoptosis, bone resorption and lipolysaccharide-mediated activation of NFKB. May produce superoxide in the nucleus and play a role in regulating gene expression upon cell stimulation. Promotes ferroptosis, reactive oxygen species production and reduced glutathione (GSH) levels by activating NLRP3 inflammasome activation and cytokine release. This is NADPH oxidase 4 (Nox4) from Mus musculus (Mouse).